A 304-amino-acid polypeptide reads, in one-letter code: uncharacterized protein (304 aa).

Coiled coils occupy residues 3–35 (KNQY…DKEI) and 89–132 (KSNK…NSNL). Residues 96 to 121 (LQNKQQENSEEKNSEEKNSEEKNSEE) are disordered.

This is an uncharacterized protein from Acanthamoeba polyphaga (Amoeba).